The following is a 456-amino-acid chain: uncharacterized protein (456 aa).

The 59-residue stretch at 2-60 (AMRKGKEYELNIEEIEFPSMGIAYHEGLKVYVKHGIPGQKVLARITTKKKDHAKGKIIE) folds into the TRAM domain. Positions 73, 79, 82, and 162 each coordinate [4Fe-4S] cluster. Positions 288, 317, 338, and 383 each coordinate S-adenosyl-L-methionine. The Nucleophile role is filled by cysteine 410.

It belongs to the class I-like SAM-binding methyltransferase superfamily. RNA M5U methyltransferase family.

This is an uncharacterized protein from Clostridium tetani (strain Massachusetts / E88).